We begin with the raw amino-acid sequence, 244 residues long: Extracellular superoxide dismutase [Cu-Zn] (244 aa).

An N-terminal signal peptide occupies residues 1 to 15 (MVAFLFCNLLLVACG). 2 disulfide bridges follow: C70–C215 and C132–C214. N-linked (GlcNAc...) asparagine glycosylation occurs at N114. Cu cation is bound by residues H121, H123, and H138. Positions 138, 146, 149, and 152 each coordinate Zn(2+). H188 is a binding site for Cu cation. The tract at residues 224-244 (AWESQTKERKKRRRESECKTT) is disordered.

This sequence belongs to the Cu-Zn superoxide dismutase family. In terms of assembly, homodimer. Interacts with ATP7A; this interaction is copper-dependent and is required for SOD3 activity. It depends on Cu cation as a cofactor. The cofactor is Zn(2+).

It is found in the secreted. The protein localises to the extracellular space. The protein resides in the golgi apparatus. Its subcellular location is the trans-Golgi network. The enzyme catalyses 2 superoxide + 2 H(+) = H2O2 + O2. In terms of biological role, protect the extracellular space from toxic effect of reactive oxygen intermediates by converting superoxide radicals into hydrogen peroxide and oxygen. This chain is Extracellular superoxide dismutase [Cu-Zn] (Sod3), found in Rattus norvegicus (Rat).